Here is a 417-residue protein sequence, read N- to C-terminus: MSELLPMATYNLNIEPYSPTPAIDVTVPVTVRLTMAAIDPESLDDEKKPATLRLIRRNPAFDDEDDLLADSEEEEEEESEEESEPETKKPKKKAAKAESEEEDSEEEDSEGEDSDDEFEEFVLATLSPESQYQQTLDLVISPEEEVQFVVTGSYRVSLSGNYVQHPYDDEDSYDEDHEGCGENCACDDDHEGCGDDCACDDDSDYDLTPDEEDILDMEDASDVEAKIEELVEQEEANEKRKADEDEPKAAKKQKKDQKDTKKDAKKDAKKDQKDQKDAKKDAKKEKKVEFKKDLEEGPSKKKDDKPKTKILEGGVVIEDRVVGSGKAAKKGARVGMRYIGKLKNGKVFDKNTSGKPFVFKLGHGEVIKGWDIGVAGMAVGGERRIVIPAAYAYGKQALPGIPANSELTFDVKLVSLK.

Disordered stretches follow at residues 42–129 and 191–307; these read SLDD…LSPE and EGCG…DKPK. 3 stretches are compositionally biased toward acidic residues: residues 61-84, 99-120, and 197-222; these read FDDE…EESE, SEEE…EFEE, and CACD…DASD. Composition is skewed to basic and acidic residues over residues 236 to 249 and 256 to 307; these read ANEK…EPKA and DQKD…DKPK. The PPIase FKBP-type domain occupies 331–417; it reads GARVGMRYIG…TFDVKLVSLK (87 aa).

This sequence belongs to the FKBP-type PPIase family. FKBP3/4 subfamily.

It localises to the nucleus. Its subcellular location is the nucleolus. The enzyme catalyses [protein]-peptidylproline (omega=180) = [protein]-peptidylproline (omega=0). Its activity is regulated as follows. Inhibited by both FK506 and rapamycin. Functionally, PPIases accelerate the folding of proteins. It catalyzes the cis-trans isomerization of proline imidic peptide bonds in oligopeptides. The sequence is that of FK506-binding protein 3 (FPR3) from Eremothecium gossypii (strain ATCC 10895 / CBS 109.51 / FGSC 9923 / NRRL Y-1056) (Yeast).